Here is a 365-residue protein sequence, read N- to C-terminus: MSEEDQGSGTTTGCGLPSIEQMLAANPGKTPISLLQEYGTRIGKTPVYDLLKAEGQAHQPNFTFRVTVGDTSCTGQGPSKKAAKHKAAEVALKHLKGGSMLEPALEDSSSFSLLDSSPPEDTPVVAAEAAAPVPSAVLTRSPPMEMQPPVSPQQSECNPVGALQELVVQKGWRLPEYMVTQESGPAHRKEFTMTCRVERFIEIGSGTSKKLAKRNAAAKMLLRVHTVPLDARDGNEAEPDDDHFSIGVSSRLDGLRNRGPGCTWDSLRNSVGEKILSLRSCSVGSLGALGSACCSVLSELSEEQAFHVSYLDIEELSLSGLCQCLVELSTQPATVCYGSATTREAARGDAAHRALQYLRIMAGSK.

Sufficient for interaction with PRKRA stretches follow at residues 22-105 (MLAA…EPAL), 151-233 (SPQQ…DARD), and 286-365 (LGAL…AGSK). The 68-residue stretch at 30-97 (TPISLLQEYG…AEVALKHLKG (68 aa)) folds into the DRBM 1 domain. Phosphoserine is present on Ser151. 2 DRBM domains span residues 158 to 226 (NPVG…RVHT) and 292 to 360 (ACCS…YLRI). The tract at residues 227 to 365 (VPLDARDGNE…QYLRIMAGSK (139 aa)) is sufficient for interaction with DICER1.

Belongs to the TARBP2 family. As to quaternary structure, self-associates. Component of the RISC loading complex (RLC), or micro-RNA (miRNA) loading complex (miRLC), which is composed of DICER1, AGO2 and TARBP2. Note that the trimeric RLC/miRLC is also referred to as RISC. Interacts with EIF2AK2/PKR and inhibits its protein kinase activity. Interacts with DHX9. Interacts with DICER1 and PRKRA. Interacts with DICER1, AGO2, MOV10, EIF6 and RPL7A (60S ribosome subunit); they form a large RNA-induced silencing complex (RISC). Interacts with IRF7; this interaction prevents IRF7 phosphorylation and activation.

The protein localises to the cytoplasm. Its subcellular location is the perinuclear region. It is found in the nucleus. Its function is as follows. Required for formation of the RNA induced silencing complex (RISC). Component of the RISC loading complex (RLC), also known as the micro-RNA (miRNA) loading complex (miRLC), which is composed of DICER1, AGO2 and TARBP2. Within the RLC/miRLC, DICER1 and TARBP2 are required to process precursor miRNAs (pre-miRNAs) to mature miRNAs and then load them onto AGO2. AGO2 bound to the mature miRNA constitutes the minimal RISC and may subsequently dissociate from DICER1 and TARBP2. May also play a role in the production of short interfering RNAs (siRNAs) from double-stranded RNA (dsRNA) by DICER1. Binds in vitro to the PRM1 3'-UTR. Seems to act as a repressor of translation. For some pre-miRNA substrates, may also alter the choice of cleavage site by DICER1. Negatively regulates IRF7-mediated IFN-beta signaling triggered by viral infection by inhibiting the phosphorylation of IRF7 and promoting its 'Lys'-48-linked ubiquitination and degradation. In Mus musculus (Mouse), this protein is RISC-loading complex subunit TARBP2 (Tarbp2).